We begin with the raw amino-acid sequence, 130 residues long: Large ribosomal subunit protein bL12 (130 aa).

This sequence belongs to the bacterial ribosomal protein bL12 family. In terms of assembly, homodimer. Part of the ribosomal stalk of the 50S ribosomal subunit. Forms a multimeric L10(L12)X complex, where L10 forms an elongated spine to which 2 to 4 L12 dimers bind in a sequential fashion. Binds GTP-bound translation factors.

Forms part of the ribosomal stalk which helps the ribosome interact with GTP-bound translation factors. Is thus essential for accurate translation. In Herpetosiphon aurantiacus (strain ATCC 23779 / DSM 785 / 114-95), this protein is Large ribosomal subunit protein bL12.